The following is an 84-amino-acid chain: RNA-binding protein Hfq (84 aa).

In terms of domain architecture, Sm spans 11–71 (DVFLNFIRKN…ISTVMPSTPI (61 aa)).

It belongs to the Hfq family. As to quaternary structure, homohexamer.

Its function is as follows. RNA chaperone that binds small regulatory RNA (sRNAs) and mRNAs to facilitate mRNA translational regulation in response to envelope stress, environmental stress and changes in metabolite concentrations. Also binds with high specificity to tRNAs. In Paramagnetospirillum magneticum (strain ATCC 700264 / AMB-1) (Magnetospirillum magneticum), this protein is RNA-binding protein Hfq.